Reading from the N-terminus, the 639-residue chain is Chaperone protein HtpG (639 aa).

Positions 1–347 (MSQQETHGFQ…SNDLPLNVSR (347 aa)) are a; substrate-binding. Residues 348–564 (EILQDNKVTT…EGEMSTQMIK (217 aa)) form a b region. A c region spans residues 565-639 (LMQAAGQDVP…MNQMLLASVK (75 aa)).

This sequence belongs to the heat shock protein 90 family. In terms of assembly, homodimer.

The protein localises to the cytoplasm. Its function is as follows. Molecular chaperone. Has ATPase activity. The protein is Chaperone protein HtpG of Shewanella halifaxensis (strain HAW-EB4).